Here is a 115-residue protein sequence, read N- to C-terminus: DNA-binding protein PYRAB09250 (115 aa).

It belongs to the PDCD5 family.

The protein is DNA-binding protein PYRAB09250 of Pyrococcus abyssi (strain GE5 / Orsay).